The chain runs to 595 residues: ATP-dependent lipid A-core flippase (595 aa).

The interval 1–20 (MSQAYQPDSTKTSAKKSSAV) is disordered. Positions 9–19 (STKTSAKKSSA) are enriched in low complexity. 4 helical membrane-spanning segments follow: residues 41–61 (WWAILLTITGFAINAGTEIWI), 81–101 (GLFPFIIVMLFFVRGVGSFLG), 169–189 (VIALMGFLLYSNWRLTLILFV), and 266–286 (INTPAVQLLMAVAMAVVVWLA). The ABC transmembrane type-1 domain occupies 45–326 (LLTITGFAIN…LTDVNQQLQR (282 aa)). The ABC transporter domain maps to 357 to 592 (IKLDNISLVY…HGHYAQMYAR (236 aa)). An ATP-binding site is contributed by 390 to 397 (GRSGAGKS).

This sequence belongs to the ABC transporter superfamily. Lipid exporter (TC 3.A.1.106) family. As to quaternary structure, homodimer.

Its subcellular location is the cell inner membrane. It catalyses the reaction ATP + H2O + lipid A-core oligosaccharideSide 1 = ADP + phosphate + lipid A-core oligosaccharideSide 2.. In terms of biological role, involved in lipopolysaccharide (LPS) biosynthesis. Translocates lipid A-core from the inner to the outer leaflet of the inner membrane. Transmembrane domains (TMD) form a pore in the inner membrane and the ATP-binding domain (NBD) is responsible for energy generation. The sequence is that of ATP-dependent lipid A-core flippase from Psychrobacter arcticus (strain DSM 17307 / VKM B-2377 / 273-4).